Reading from the N-terminus, the 633-residue chain is Chaperone protein dnaK2 (633 aa).

Thr-196 is subject to Phosphothreonine; by autocatalysis. Residues 600–633 (ATADGGPAQHAATGGPTSGGGGGDDVIDAEFDKG) are disordered. The segment covering 624-633 (DVIDAEFDKG) has biased composition (acidic residues).

This sequence belongs to the heat shock protein 70 family.

Acts as a chaperone. The polypeptide is Chaperone protein dnaK2 (dnaK2) (Streptomyces avermitilis (strain ATCC 31267 / DSM 46492 / JCM 5070 / NBRC 14893 / NCIMB 12804 / NRRL 8165 / MA-4680)).